A 78-amino-acid polypeptide reads, in one-letter code: Small ribosomal subunit protein bS16c (78 aa).

It belongs to the bacterial ribosomal protein bS16 family.

It localises to the plastid. Its subcellular location is the chloroplast. This Chara vulgaris (Common stonewort) protein is Small ribosomal subunit protein bS16c.